We begin with the raw amino-acid sequence, 464 residues long: ATP-dependent protease ATPase subunit HslU (464 aa).

ATP-binding positions include V18, G60–E65, D277, E342, and R414.

The protein belongs to the ClpX chaperone family. HslU subfamily. A double ring-shaped homohexamer of HslV is capped on each side by a ring-shaped HslU homohexamer. The assembly of the HslU/HslV complex is dependent on binding of ATP.

The protein resides in the cytoplasm. ATPase subunit of a proteasome-like degradation complex; this subunit has chaperone activity. The binding of ATP and its subsequent hydrolysis by HslU are essential for unfolding of protein substrates subsequently hydrolyzed by HslV. HslU recognizes the N-terminal part of its protein substrates and unfolds these before they are guided to HslV for hydrolysis. This chain is ATP-dependent protease ATPase subunit HslU, found in Lactobacillus delbrueckii subsp. bulgaricus (strain ATCC BAA-365 / Lb-18).